We begin with the raw amino-acid sequence, 366 residues long: tRNA/tmRNA (uracil-C(5))-methyltransferase (366 aa).

S-adenosyl-L-methionine is bound by residues glutamine 190, tyrosine 218, asparagine 223, glutamate 239, and aspartate 299. The Nucleophile role is filled by cysteine 324. The active-site Proton acceptor is glutamate 358.

Belongs to the class I-like SAM-binding methyltransferase superfamily. RNA M5U methyltransferase family. TrmA subfamily.

It catalyses the reaction uridine(54) in tRNA + S-adenosyl-L-methionine = 5-methyluridine(54) in tRNA + S-adenosyl-L-homocysteine + H(+). The catalysed reaction is uridine(341) in tmRNA + S-adenosyl-L-methionine = 5-methyluridine(341) in tmRNA + S-adenosyl-L-homocysteine + H(+). In terms of biological role, dual-specificity methyltransferase that catalyzes the formation of 5-methyluridine at position 54 (m5U54) in all tRNAs, and that of position 341 (m5U341) in tmRNA (transfer-mRNA). This is tRNA/tmRNA (uracil-C(5))-methyltransferase from Escherichia fergusonii (strain ATCC 35469 / DSM 13698 / CCUG 18766 / IAM 14443 / JCM 21226 / LMG 7866 / NBRC 102419 / NCTC 12128 / CDC 0568-73).